The sequence spans 61 residues: Large ribosomal subunit protein uL30 (61 aa).

This sequence belongs to the universal ribosomal protein uL30 family. Part of the 50S ribosomal subunit.

This chain is Large ribosomal subunit protein uL30, found in Jannaschia sp. (strain CCS1).